A 402-amino-acid chain; its full sequence is MQATKIIDGFHLVGAIDWNSRDFHGYTLSPMGTTYNAYLVEDEKTTLFDTVKAEYKGELLCGIASVIDPKKIDYLVIQHLELDHAGALPALIEACQPEKIFTSSLGQKAMESHFHYKDWPVQVVKHGETLSLGKRTVTFYETRMLHWPDSMVSWFADEKVLISNDIFGQNIAASERFSDQIPVHTLERAMREYYANIVNPYAPQTLKAIETLVGAGVAPEFICPDHGVIFRGADQCTFAVQKYVEYAEQKPTNKVVIFYDSMWHSTEKMARVLAESFRDEGCTVKLMWCKACHHSQIMSEISDAGAVIVGSPTHNNGILPYVAGTLQYIKGLRPQNKIGGAFGSFGWSGESTKVLAEWLTGMGFDMPATPVKVKNVPTHADYEQLKTMAQTIARALKAKLAA.

The segment at 30–216 is zinc metallo-hydrolase; sequence PMGTTYNAYL…KAIETLVGAG (187 aa). Positions 79, 81, 83, 146, 165, and 226 each coordinate Fe cation. The region spanning 255-393 is the Flavodoxin-like domain; the sequence is VVIFYDSMWH…QLKTMAQTIA (139 aa).

In the N-terminal section; belongs to the zinc metallo-hydrolase group 3 family. Homodimer. It depends on FMN as a cofactor. Fe cation is required as a cofactor.

Its pathway is energy metabolism; electron transfer. Its function is as follows. Catalyzes the four-electron reduction of one oxygen molecule to two water molecules. This Megalodesulfovibrio gigas (strain ATCC 19364 / DSM 1382 / NCIMB 9332 / VKM B-1759) (Desulfovibrio gigas) protein is Rubredoxin-oxygen oxidoreductase (roo).